A 94-amino-acid polypeptide reads, in one-letter code: Co-chaperonin GroES (94 aa).

It belongs to the GroES chaperonin family. In terms of assembly, heptamer of 7 subunits arranged in a ring. Interacts with the chaperonin GroEL.

It localises to the cytoplasm. Functionally, together with the chaperonin GroEL, plays an essential role in assisting protein folding. The GroEL-GroES system forms a nano-cage that allows encapsulation of the non-native substrate proteins and provides a physical environment optimized to promote and accelerate protein folding. GroES binds to the apical surface of the GroEL ring, thereby capping the opening of the GroEL channel. The protein is Co-chaperonin GroES of Streptococcus pneumoniae (strain CGSP14).